The primary structure comprises 129 residues: uncharacterized protein (129 aa).

A helical membrane pass occupies residues 5–25; the sequence is IIGLTLAFFVLFLTAVAILFT.

The protein resides in the membrane. This is an uncharacterized protein from Mycoplasma pneumoniae (strain ATCC 29342 / M129 / Subtype 1) (Mycoplasmoides pneumoniae).